A 132-amino-acid polypeptide reads, in one-letter code: Large ribosomal subunit protein uL14 (132 aa).

It belongs to the universal ribosomal protein uL14 family. Part of the 50S ribosomal subunit. Forms a cluster with proteins L3 and L24e, part of which may contact the 16S rRNA in 2 intersubunit bridges.

In terms of biological role, binds to 23S rRNA. Forms part of two intersubunit bridges in the 70S ribosome. This chain is Large ribosomal subunit protein uL14, found in Methanocaldococcus jannaschii (strain ATCC 43067 / DSM 2661 / JAL-1 / JCM 10045 / NBRC 100440) (Methanococcus jannaschii).